Consider the following 122-residue polypeptide: Large ribosomal subunit protein uL14 (122 aa).

It belongs to the universal ribosomal protein uL14 family. As to quaternary structure, part of the 50S ribosomal subunit. Forms a cluster with proteins L3 and L19. In the 70S ribosome, L14 and L19 interact and together make contacts with the 16S rRNA in bridges B5 and B8.

Binds to 23S rRNA. Forms part of two intersubunit bridges in the 70S ribosome. This is Large ribosomal subunit protein uL14 from Sinorhizobium fredii (strain NBRC 101917 / NGR234).